The primary structure comprises 255 residues: Microfibril-associated glycoprotein 4 (255 aa).

Positions 1–21 (MKALLALPLLLLLSTPPCAPQ) are cleaved as a signal peptide. A Cell attachment site motif is present at residues 26–28 (RGD). Residues 32 to 255 (RFCLQQPLDC…KRTEMKIRRA (224 aa)) form the Fibrinogen C-terminal domain. 2 N-linked (GlcNAc...) asparagine glycosylation sites follow: Asn87 and Asn137.

Homodimer. Can also form higher oligomers. Interacts with FBN1, FBN2 and LOX. Interacts with COL1A1 in a Ca (2+)-dependent manner. Interacts with ELN in a Ca (2+)-dependent manner; this interaction promotes ELN self-assembly.

The protein localises to the secreted. It localises to the extracellular space. Its subcellular location is the extracellular matrix. Could be involved in calcium-dependent cell adhesion or intercellular interactions. May contribute to the elastic fiber assembly and/or maintenance. This Homo sapiens (Human) protein is Microfibril-associated glycoprotein 4 (MFAP4).